Reading from the N-terminus, the 367-residue chain is uncharacterized protein (367 aa).

The chain crosses the membrane as a helical span at residues 8-28 (VLIGTFVLAAILAVFGFIYWL).

The protein resides in the membrane. This is an uncharacterized protein from Bradyrhizobium diazoefficiens (strain JCM 10833 / BCRC 13528 / IAM 13628 / NBRC 14792 / USDA 110).